A 180-amino-acid chain; its full sequence is MKIINIIKGVGTQLRSLGMVFSHAWSPRETLNYPEQAVYAAPRYRGRIVLTRDPDGDERCVACNLCAVACPVGCISLQKSEREDGRWYPEFFRINFSRCIFCGLCEEACPTTAIQLTPDFEMGEYRRQDLVYEKEDLLISGPGKYPDYNFYRMSGMAIDGKPKGDAENEAKPIDVKSLLP.

4Fe-4S ferredoxin-type domains follow at residues 48–80 (IVLT…LQKS) and 90–119 (EFFR…LTPD). Cys60, Cys63, Cys66, Cys70, Cys99, Cys102, Cys105, and Cys109 together coordinate [4Fe-4S] cluster. The span at 161-174 (KPKGDAENEAKPID) shows a compositional bias: basic and acidic residues. The disordered stretch occupies residues 161 to 180 (KPKGDAENEAKPIDVKSLLP).

Belongs to the complex I 23 kDa subunit family. As to quaternary structure, NDH-1 is composed of 14 different subunits. Subunits NuoA, H, J, K, L, M, N constitute the membrane sector of the complex. The cofactor is [4Fe-4S] cluster.

It is found in the cell inner membrane. It catalyses the reaction a quinone + NADH + 5 H(+)(in) = a quinol + NAD(+) + 4 H(+)(out). In terms of biological role, NDH-1 shuttles electrons from NADH, via FMN and iron-sulfur (Fe-S) centers, to quinones in the respiratory chain. The immediate electron acceptor for the enzyme in this species is believed to be ubiquinone. Couples the redox reaction to proton translocation (for every two electrons transferred, four hydrogen ions are translocated across the cytoplasmic membrane), and thus conserves the redox energy in a proton gradient. This chain is NADH-quinone oxidoreductase subunit I, found in Aeromonas hydrophila subsp. hydrophila (strain ATCC 7966 / DSM 30187 / BCRC 13018 / CCUG 14551 / JCM 1027 / KCTC 2358 / NCIMB 9240 / NCTC 8049).